The following is a 521-amino-acid chain: 3,4-dihydroxyphenylacetaldehyde synthase (521 aa).

At lysine 306 the chain carries N6-(pyridoxal phosphate)lysine.

The protein belongs to the group II decarboxylase family. Requires pyridoxal 5'-phosphate as cofactor. In terms of tissue distribution, highly expressed in the cuticle and midgut. Low expression in the head and thorax.

The catalysed reaction is L-dopa + O2 + H2O + H(+) = 3,4-dihydroxyphenylacetaldehyde + H2O2 + NH4(+) + CO2. Its function is as follows. Catalyzes the decarboxylation-oxidative deamination of L-3,4-dihydroxyphenylalanine (L-DOPA) to 3,4-dihydroxylphenylacetaldehyde (DHPAA). Involved in cuticle development. Probably responsible for the protein cross-linking during the development of flexible cuticles. This chain is 3,4-dihydroxyphenylacetaldehyde synthase, found in Aedes aegypti (Yellowfever mosquito).